Here is a 467-residue protein sequence, read N- to C-terminus: UDP-N-acetylmuramate--L-alanine ligase (467 aa).

114-120 contributes to the ATP binding site; it reads GTHGKTT.

It belongs to the MurCDEF family.

It localises to the cytoplasm. It carries out the reaction UDP-N-acetyl-alpha-D-muramate + L-alanine + ATP = UDP-N-acetyl-alpha-D-muramoyl-L-alanine + ADP + phosphate + H(+). Its pathway is cell wall biogenesis; peptidoglycan biosynthesis. Its function is as follows. Cell wall formation. This chain is UDP-N-acetylmuramate--L-alanine ligase, found in Nitrobacter winogradskyi (strain ATCC 25391 / DSM 10237 / CIP 104748 / NCIMB 11846 / Nb-255).